The sequence spans 78 residues: Large ribosomal subunit protein bL28 (78 aa).

Positions 1–23 are disordered; the sequence is MSRVCQVTGKKPMVGNNRSHAKN.

This sequence belongs to the bacterial ribosomal protein bL28 family.

The chain is Large ribosomal subunit protein bL28 from Shewanella frigidimarina (strain NCIMB 400).